Reading from the N-terminus, the 270-residue chain is MSDQQQPPVYKIALGIEYDGSKYYGWQRQNEVRSVQEKLEKALSQVANEPITVFCAGRTDAGVHGTGQVVHFETTAQRKDAAWTLGVNANLPGDIAVRWVKAVPDDFHARFSATARRYRYIIYNHRLRPAVLSKGVTHFYEPLDAERMHRAAQCLLGENDFTSFRAVQCQSRTPWRNVMHINVTRHGPYVVVDIKANAFVHHMVRNIVGSLMEVGAHNQPESWIAELLAAKDRTLAAATAKAEGLYLVAVDYPDRYDLPKPPMGPLFLAD.

The active-site Nucleophile is the aspartate 60. Residues 107–111 (FHARF) form an RNA binding region. Tyrosine 118 is a substrate binding site. Positions 168-172 (QCQSR) are interaction with tRNA.

It belongs to the tRNA pseudouridine synthase TruA family. Homodimer.

The catalysed reaction is uridine(38/39/40) in tRNA = pseudouridine(38/39/40) in tRNA. Its function is as follows. Formation of pseudouridine at positions 38, 39 and 40 in the anticodon stem and loop of transfer RNAs. The protein is tRNA pseudouridine synthase A of Escherichia coli (strain 55989 / EAEC).